Consider the following 326-residue polypeptide: Tagatose 1,6-diphosphate aldolase (326 aa).

The protein belongs to the aldolase LacD family.

It catalyses the reaction D-tagatofuranose 1,6-bisphosphate = D-glyceraldehyde 3-phosphate + dihydroxyacetone phosphate. It functions in the pathway carbohydrate metabolism; D-tagatose 6-phosphate degradation; D-glyceraldehyde 3-phosphate and glycerone phosphate from D-tagatose 6-phosphate: step 2/2. The polypeptide is Tagatose 1,6-diphosphate aldolase (Staphylococcus aureus (strain MW2)).